Reading from the N-terminus, the 405-residue chain is Probable tRNA sulfurtransferase (405 aa).

The THUMP domain maps to 75–183 (PRAAGAAADV…QNLAYVYLET (109 aa)). Residues 201 to 202 (LM), Lys-285, Gly-307, and Gln-316 contribute to the ATP site.

Belongs to the ThiI family.

The protein resides in the cytoplasm. It carries out the reaction [ThiI sulfur-carrier protein]-S-sulfanyl-L-cysteine + a uridine in tRNA + 2 reduced [2Fe-2S]-[ferredoxin] + ATP + H(+) = [ThiI sulfur-carrier protein]-L-cysteine + a 4-thiouridine in tRNA + 2 oxidized [2Fe-2S]-[ferredoxin] + AMP + diphosphate. The catalysed reaction is [ThiS sulfur-carrier protein]-C-terminal Gly-Gly-AMP + S-sulfanyl-L-cysteinyl-[cysteine desulfurase] + AH2 = [ThiS sulfur-carrier protein]-C-terminal-Gly-aminoethanethioate + L-cysteinyl-[cysteine desulfurase] + A + AMP + 2 H(+). It functions in the pathway cofactor biosynthesis; thiamine diphosphate biosynthesis. Catalyzes the ATP-dependent transfer of a sulfur to tRNA to produce 4-thiouridine in position 8 of tRNAs, which functions as a near-UV photosensor. Also catalyzes the transfer of sulfur to the sulfur carrier protein ThiS, forming ThiS-thiocarboxylate. This is a step in the synthesis of thiazole, in the thiamine biosynthesis pathway. The sulfur is donated as persulfide by IscS. This chain is Probable tRNA sulfurtransferase, found in Methanosarcina mazei (strain ATCC BAA-159 / DSM 3647 / Goe1 / Go1 / JCM 11833 / OCM 88) (Methanosarcina frisia).